A 235-amino-acid polypeptide reads, in one-letter code: Myelin protein zero-like protein 3 (235 aa).

Positions 1-31 (MQQRGAAGSRGCALFPLLGVLFFQGVYIVFS) are cleaved as a signal peptide. Residues 32 to 148 (LEIRADAHVR…NIPMTELTVT (117 aa)) enclose the Ig-like V-type domain. Residues 32–158 (LEIRADAHVR…ERGFGTMLSS (127 aa)) lie on the Extracellular side of the membrane. Residues cysteine 52 and cysteine 128 are joined by a disulfide bond. N-linked (GlcNAc...) asparagine glycosylation occurs at asparagine 123. Residues 159–179 (VALLSILVFVPSAVVVALLLV) form a helical membrane-spanning segment. Residues 180 to 235 (RMGRKAAGLKKRSRSGYKKSSIEVSDDTDQEEEEACMARLCVRCAECLDSDYEETY) lie on the Cytoplasmic side of the membrane.

This sequence belongs to the myelin P0 protein family.

Its subcellular location is the membrane. In terms of biological role, mediates homophilic cell-cell adhesion. The protein is Myelin protein zero-like protein 3 (MPZL3) of Homo sapiens (Human).